The sequence spans 411 residues: Peptide chain release factor subunit 1 (411 aa).

It belongs to the eukaryotic release factor 1 family. Heterodimer of two subunits, one of which binds GTP.

Its subcellular location is the cytoplasm. Functionally, directs the termination of nascent peptide synthesis (translation) in response to the termination codons UAA, UAG and UGA. This Methanosphaera stadtmanae (strain ATCC 43021 / DSM 3091 / JCM 11832 / MCB-3) protein is Peptide chain release factor subunit 1.